A 218-amino-acid polypeptide reads, in one-letter code: Glutathione S-transferase Mu 2 (218 aa).

Positions 2–88 (PMTLGYWNIR…YIARKHNLCG (87 aa)) constitute a GST N-terminal domain. 7 to 8 (YW) contacts glutathione. Phosphoserine occurs at positions 27 and 44. Glutathione contacts are provided by residues 43 to 46 (RSQW), lysine 50, 59 to 60 (NL), and 72 to 73 (QS). Residues 90 to 208 (TEKEKIREDI…KSSRFLPRPV (119 aa)) enclose the GST C-terminal domain. Tyrosine 116 is a substrate binding site.

It belongs to the GST superfamily. Mu family. As to quaternary structure, homodimer.

The protein localises to the cytoplasm. The catalysed reaction is RX + glutathione = an S-substituted glutathione + a halide anion + H(+). It carries out the reaction 11(S)-hydroxy-14(S),15(S)-epoxy-(5Z,8Z,12E)-eicosatrienoate + glutathione = (11S,15S)-dihydroxy-14(R)-S-glutathionyl-(5Z,8Z,12E)-eicosatrienoate. Functionally, conjugation of reduced glutathione to a wide number of exogenous and endogenous hydrophobic electrophiles. Participates in the formation of novel hepoxilin regioisomers. Has activity toward aflatoxin B(1)-8,9-epoxide (AFBO). This Macaca fascicularis (Crab-eating macaque) protein is Glutathione S-transferase Mu 2 (GSTM2).